The following is a 137-amino-acid chain: Fluoride-specific ion channel FluC (137 aa).

Helical transmembrane passes span I11 to F31, G42 to L62, L75 to F95, and G107 to L127. The Na(+) site is built by G82 and T85.

The protein belongs to the fluoride channel Fluc/FEX (TC 1.A.43) family.

The protein resides in the cell inner membrane. The enzyme catalyses fluoride(in) = fluoride(out). With respect to regulation, na(+) is not transported, but it plays an essential structural role and its presence is essential for fluoride channel function. In terms of biological role, fluoride-specific ion channel. Important for reducing fluoride concentration in the cell, thus reducing its toxicity. This Trichormus variabilis (strain ATCC 29413 / PCC 7937) (Anabaena variabilis) protein is Fluoride-specific ion channel FluC.